The sequence spans 678 residues: DNA ligase (678 aa).

NAD(+)-binding positions include 47-51 (DSDYD), 96-97 (SL), and Glu122. The active-site N6-AMP-lysine intermediate is Lys124. Residues Arg145, Glu182, Lys300, and Lys324 each contribute to the NAD(+) site. The Zn(2+) site is built by Cys418, Cys421, Cys436, and Cys442. The BRCT domain maps to 602-678 (AHNESFTNKT…IFEEDLQNLL (77 aa)).

Belongs to the NAD-dependent DNA ligase family. LigA subfamily. Mg(2+) is required as a cofactor. Requires Mn(2+) as cofactor.

The catalysed reaction is NAD(+) + (deoxyribonucleotide)n-3'-hydroxyl + 5'-phospho-(deoxyribonucleotide)m = (deoxyribonucleotide)n+m + AMP + beta-nicotinamide D-nucleotide.. Functionally, DNA ligase that catalyzes the formation of phosphodiester linkages between 5'-phosphoryl and 3'-hydroxyl groups in double-stranded DNA using NAD as a coenzyme and as the energy source for the reaction. It is essential for DNA replication and repair of damaged DNA. This Francisella philomiragia subsp. philomiragia (strain ATCC 25017 / CCUG 19701 / FSC 153 / O#319-036) protein is DNA ligase.